A 544-amino-acid chain; its full sequence is MIASGPPPRVYWTSLIFLLLACCLLPTGAQGQTYQVRVEPKDPVVPFGEPLVVNCTLDCPGPGLISLETALSKEPHSRGLGWAAFRLTNVTGDMEILCSGICNKSQVVGFSNITVFGFPKRVELAPLPLWQPVGEELNLSCLVSGGAPRAHLSVVLLRGEEELGRQPLGKEEPAKVTFMVQPRREDHGTNFSCRSELDLRSQGLELFQNTSAPRKLQTYAMPKTAPRLVFPRFWEMETSWPVNCSLNGLFPASEAHIQLALGNQMLNATVVSHADTLTATATAKTEQEGTQEIVCNVTLGVENRETRESLVAYRFQGPNLNLSESNATEGTPVTVTCAAGPQVQVMLDGVPAAVPGQPAQLQLKATEMDDRRTFFCNATLKVHGVTLHRNRSIQLRVLYGPTIDRAKCPQRLMWKEKTMHILQCQARGNPNPQLQCLREGSKFKVPVGIPFLVLLNYSGTYSCQAASSRGTDKMLVMMDVQGRNPVTINIVLGVLAILGLVTLAAASVYVFWVQRQHDIYHLTPRSTRWRLTSTQPVTVAEELS.

An N-terminal signal peptide occupies residues 1–31 (MIASGPPPRVYWTSLIFLLLACCLLPTGAQG). At 32–486 (QTYQVRVEPK…MMDVQGRNPV (455 aa)) the chain is on the extracellular side. The Ig-like C2-type 1 domain maps to 48–105 (GEPLVVNCTLDCPGPGLISLETALSKEPHSRGLGWAAFRLTNVTGDMEILCSGICNKS). Residues asparagine 54, asparagine 89, asparagine 103, asparagine 112, asparagine 138, asparagine 190, asparagine 209, asparagine 243, asparagine 267, asparagine 296, asparagine 321, and asparagine 326 are each glycosylated (N-linked (GlcNAc...) asparagine). Disulfide bonds link cysteine 55–cysteine 98 and cysteine 59–cysteine 102. The 67-residue stretch at 134–200 (GEELNLSCLV…FSCRSELDLR (67 aa)) folds into the Ig-like C2-type 2 domain. A disulfide bridge connects residues cysteine 141 and cysteine 193. In terms of domain architecture, Ig-like C2-type 3 spans 237 to 302 (ETSWPVNCSL…IVCNVTLGVE (66 aa)). Cysteine 244 and cysteine 295 are oxidised to a cystine. Positions 330 to 383 (GTPVTVTCAAGPQVQVMLDGVPAAVPGQPAQLQLKATEMDDRRTFFCNATLKVH) constitute an Ig-like C2-type 4 domain. An intrachain disulfide couples cysteine 337 to cysteine 376. Asparagine 377, asparagine 390, and asparagine 456 each carry an N-linked (GlcNAc...) asparagine glycan. Residues 417-470 (KTMHILQCQARGNPNPQLQCLREGSKFKVPVGIPFLVLLNYSGTYSCQAASSRG) enclose the Ig-like C2-type 5 domain. The cysteines at positions 424 and 463 are disulfide-linked. The chain crosses the membrane as a helical span at residues 487 to 511 (TINIVLGVLAILGLVTLAAASVYVF). The Cytoplasmic portion of the chain corresponds to 512-544 (WVQRQHDIYHLTPRSTRWRLTSTQPVTVAEELS).

The protein belongs to the immunoglobulin superfamily. ICAM family. In terms of assembly, interacts with moesin/MSN. Leukocytes.

The protein resides in the membrane. Functionally, ICAM proteins are ligands for the leukocyte adhesion protein LFA-1 (integrin alpha-L/beta-2). ICAM3 is also a ligand for integrin alpha-D/beta-2. In association with integrin alpha-L/beta-2, contributes to apoptotic neutrophil phagocytosis by macrophages. The polypeptide is Intercellular adhesion molecule 3 (ICAM3) (Bos taurus (Bovine)).